Consider the following 142-residue polypeptide: Large ribosomal subunit protein uL13 (142 aa).

Belongs to the universal ribosomal protein uL13 family. As to quaternary structure, part of the 50S ribosomal subunit.

In terms of biological role, this protein is one of the early assembly proteins of the 50S ribosomal subunit, although it is not seen to bind rRNA by itself. It is important during the early stages of 50S assembly. The polypeptide is Large ribosomal subunit protein uL13 (Maridesulfovibrio salexigens (strain ATCC 14822 / DSM 2638 / NCIMB 8403 / VKM B-1763) (Desulfovibrio salexigens)).